The primary structure comprises 988 residues: Chloride channel protein 1 (988 aa).

At methionine 1–glycine 118 the chain is on the cytoplasmic side. Positions histidine 65 to aspartate 75 are enriched in basic and acidic residues. Residues histidine 65 to aspartate 92 are disordered. A helical transmembrane segment spans residues isoleucine 119–tyrosine 150. Residues alanine 151–proline 158 are Extracellular-facing. A helical transmembrane segment spans residues leucine 159 to cysteine 179. Residues histidine 180–serine 183 are Cytoplasmic-facing. Positions proline 184–serine 189 form an intramembrane region, note=Loop between two helices. A Selectivity filter part_1 motif is present at residues glycine 188–proline 192. Serine 189 lines the chloride pocket. Positions glycine 190–lysine 195 form an intramembrane region, helical. Residues threonine 196–threonine 208 are Cytoplasmic-facing. An intramembrane region (helical) is located at residues methionine 209–glycine 224. An intramembrane region (note=Loop between two helices) is located at residues serine 225–glycine 230. A Selectivity filter part_2 motif is present at residues glycine 230–proline 234. Residues lysine 231 to leucine 246 constitute an intramembrane region (helical). Residues serine 247–threonine 268 lie on the Cytoplasmic side of the membrane. 2 consecutive intramembrane regions (helical) follow at residues valine 269–glycine 280 and threonine 281–isoleucine 290. The Cytoplasmic segment spans residues glutamate 291–asparagine 301. The helical transmembrane segment at tyrosine 302–valine 321 threads the bilayer. Topologically, residues tryptophan 322–glutamate 347 are extracellular. Residues leucine 348–valine 376 form a helical membrane-spanning segment. At arginine 377 to arginine 390 the chain is on the cytoplasmic side. The helical transmembrane segment at leucine 391–proline 408 threads the bilayer. The Extracellular portion of the chain corresponds to glycine 409 to methionine 414. An intramembrane region (note=Loop between two helices) is located at residues alanine 415–leucine 418. The segment at residues methionine 419 to threonine 426 is an intramembrane region (helical). The Extracellular portion of the chain corresponds to leucine 427–valine 457. The segment at residues isoleucine 458 to threonine 475 is an intramembrane region (helical). The segment at residues threonine 476–glycine 482 is an intramembrane region (note=Loop between two helices). The short motif at glycine 482 to proline 486 is the Selectivity filter part_3 element. Residues glycine 483–valine 498 constitute an intramembrane region (helical). Phenylalanine 484 is a chloride binding site. At glycine 499–proline 521 the chain is on the extracellular side. Residues glycine 522–histidine 538 constitute an intramembrane region (helical). An intramembrane region (note=Loop between two helices) is located at residues threonine 539–valine 540. The helical intramembrane region spans serine 541–alanine 554. At histidine 555 to leucine 557 the chain is on the extracellular side. An intramembrane region (helical) is located at residues proline 558–glutamine 571. An intramembrane region (note=Loop between two helices) is located at residues serine 572 to proline 575. Residues serine 576 to tyrosine 578 constitute an intramembrane region (helical). Tyrosine 578 contacts chloride. Over aspartate 579–leucine 988 the chain is Cytoplasmic. Residues methionine 609–glutamate 668 form the CBS 1 domain. A disordered region spans residues glutamate 713–arginine 764. In terms of domain architecture, CBS 2 spans isoleucine 821–serine 876. The segment at leucine 880–leucine 988 is disordered. A Phosphoserine modification is found at serine 886. The segment covering phenylalanine 887 to asparagine 906 has biased composition (polar residues). Over residues threonine 929–serine 941 the composition is skewed to pro residues. Acidic residues-rich tracts occupy residues glutamate 950 to alanine 967 and aspartate 979 to leucine 988.

It belongs to the chloride channel (TC 2.A.49) family. ClC-1/CLCN1 subfamily. As to quaternary structure, homodimer. In terms of tissue distribution, predominantly expressed in skeletal muscles.

It is found in the cell membrane. It localises to the sarcolemma. The protein localises to the T-tubule. It carries out the reaction chloride(in) = chloride(out). It catalyses the reaction thiocyanate(in) = thiocyanate(out). The catalysed reaction is bromide(in) = bromide(out). The enzyme catalyses nitrate(in) = nitrate(out). It carries out the reaction iodide(out) = iodide(in). Its activity is regulated as follows. Modulated by membrane voltage with depolarization favouring channel opening and hyperpolarization favouring channel closure. Inhibited by acidic pH and ATP binding due to a shift of voltage dependence of common gating to more positive voltages. Inhibited by 9-anthracene-carboxylic. In terms of biological role, voltage-gated chloride channel involved in skeletal muscle excitability. Generates most of the plasma membrane chloride conductance in skeletal muscle fibers, stabilizes the resting membrane potential and contributes to the repolarization phase during action potential firing. Forms a homodimeric channel where each subunit has its own ion conduction pathway. Conducts double-barreled currents controlled by two types of gates, two fast glutamate gates that control each subunit independently and a slow common gate that opens and shuts off both subunits simultaneously. Has a significant open probability at muscle resting potential and is further activated upon membrane depolarization. Permeable to small monovalent anions with ion selectivity for chloride &gt; thiocyanate &gt; bromide &gt; nitrate &gt; iodide. The chain is Chloride channel protein 1 from Homo sapiens (Human).